We begin with the raw amino-acid sequence, 453 residues long: UDP-N-acetylmuramoylalanine--D-glutamate ligase (453 aa).

Residue 119–125 (GTNGKTT) participates in ATP binding.

Belongs to the MurCDEF family.

The protein resides in the cytoplasm. The enzyme catalyses UDP-N-acetyl-alpha-D-muramoyl-L-alanine + D-glutamate + ATP = UDP-N-acetyl-alpha-D-muramoyl-L-alanyl-D-glutamate + ADP + phosphate + H(+). Its pathway is cell wall biogenesis; peptidoglycan biosynthesis. In terms of biological role, cell wall formation. Catalyzes the addition of glutamate to the nucleotide precursor UDP-N-acetylmuramoyl-L-alanine (UMA). This chain is UDP-N-acetylmuramoylalanine--D-glutamate ligase, found in Syntrophus aciditrophicus (strain SB).